The sequence spans 285 residues: Golgi to ER traffic protein 2 (285 aa).

The span at 1–10 (MSELTEAEKR) shows a compositional bias: basic and acidic residues. Disordered regions lie at residues 1-72 (MSEL…KEDS) and 87-106 (MQGQGTGKSTPQDSSTPDLL). Residue serine 2 is modified to N-acetylserine. The Cytoplasmic segment spans residues 2–148 (SELTEAEKRR…LDYHDYLLNR (147 aa)). Residues 11 to 20 (RLLRERRQKK) are compositionally biased toward basic residues. The segment covering 24 to 42 (GGASSRLNKITGQASSHLN) has biased composition (polar residues). Serine 45 carries the post-translational modification Phosphoserine. Over residues 49-60 (APSAAKTTPPAS) the composition is skewed to low complexity. A compositionally biased stretch (polar residues) spans 93 to 104 (GKSTPQDSSTPD). The chain crosses the membrane as a helical span at residues 149 to 169 (LKAWTILVKWVFFLLPYLYLI). Topologically, residues 170 to 196 (TRPNSSVWPAYAFTQSAWFAPLRNPSN) are lumenal. N-linked (GlcNAc...) asparagine glycosylation is found at asparagine 173 and asparagine 196. A helical transmembrane segment spans residues 197–216 (FTRIFATFEFLSISIYYQLL). The Cytoplasmic portion of the chain corresponds to 217 to 263 (KNVEHKSKIKNLQDTNKLVKLVSLVPEGVIPVANLKGKLITLLQYWD). A helical membrane pass occupies residues 264 to 284 (LLSMLITDISFVLIVLGLLTY). A topological domain (lumenal) is located at residue leucine 285.

It belongs to the GET2 family. As to quaternary structure, component of the Golgi to ER traffic (GET) complex, which is composed of GET1, GET2 and GET3. Within the complex, GET1 and GET2 form a heterotetramer which is stabilized by phosphatidylinositol binding and which binds to the GET3 homodimer.

It localises to the endoplasmic reticulum membrane. The protein localises to the golgi apparatus membrane. Functionally, required for the post-translational delivery of tail-anchored (TA) proteins to the endoplasmic reticulum. Together with GET1, acts as a membrane receptor for soluble GET3, which recognizes and selectively binds the transmembrane domain of TA proteins in the cytosol. The GET complex cooperates with the HDEL receptor ERD2 to mediate the ATP-dependent retrieval of resident ER proteins that contain a C-terminal H-D-E-L retention signal from the Golgi to the ER. Involved in DNA replication and DNA damage response and also in cell wall function. This chain is Golgi to ER traffic protein 2, found in Saccharomyces cerevisiae (strain RM11-1a) (Baker's yeast).